We begin with the raw amino-acid sequence, 333 residues long: Phenylalanine--tRNA ligase alpha subunit (333 aa).

Residue E254 coordinates Mg(2+).

This sequence belongs to the class-II aminoacyl-tRNA synthetase family. Phe-tRNA synthetase alpha subunit type 1 subfamily. As to quaternary structure, tetramer of two alpha and two beta subunits. The cofactor is Mg(2+).

The protein localises to the cytoplasm. It carries out the reaction tRNA(Phe) + L-phenylalanine + ATP = L-phenylalanyl-tRNA(Phe) + AMP + diphosphate + H(+). The polypeptide is Phenylalanine--tRNA ligase alpha subunit (Xylella fastidiosa (strain M12)).